The chain runs to 301 residues: LHMIHLHWYQYPPMNPMMYPLLLVFMLITGILCLAGNFVTIWVFMNTKSLRTPANLLVVNLAMSDFLMMFTMFPPMMITCYYHTWTLGATFCEVYAFLGNLCGCASIWTMVFITFDRYNVIVKGVAGEPLSTKKASLWILTVWVLSFTWCVAPFFGWNRYVPEGNLTGCGTDYLSEDILSRSYLYIYSTWVYFLPLAITIYCYVFIIKAVAAHEKGMRDQAKKMGIKSLRNEEAQKTSAECRLAKIAMTTVALWFIAWTPYLLINWVGMFARSYLSPVYTIWGYVFAKANAVYNPIVYAIS.

Over 1 to 18 the chain is Extracellular; that stretch reads LHMIHLHWYQYPPMNPMM. Residues 19–43 form a helical membrane-spanning segment; it reads YPLLLVFMLITGILCLAGNFVTIWV. At 44–55 the chain is on the cytoplasmic side; that stretch reads FMNTKSLRTPAN. The chain crosses the membrane as a helical span at residues 56-78; the sequence is LLVVNLAMSDFLMMFTMFPPMMI. Topologically, residues 79–92 are extracellular; sequence TCYYHTWTLGATFC. Cys92 and Cys169 are oxidised to a cystine. A helical transmembrane segment spans residues 93–115; it reads EVYAFLGNLCGCASIWTMVFITF. Positions 116–118 match the 'Ionic lock' involved in activated form stabilization motif; sequence DRY. Topologically, residues 116-134 are cytoplasmic; it reads DRYNVIVKGVAGEPLSTKK. The chain crosses the membrane as a helical span at residues 135 to 155; that stretch reads ASLWILTVWVLSFTWCVAPFF. Residues 156–182 lie on the Extracellular side of the membrane; the sequence is GWNRYVPEGNLTGCGTDYLSEDILSRS. A glycan (N-linked (GlcNAc...) asparagine) is linked at Asn165. Residues 183 to 204 form a helical membrane-spanning segment; that stretch reads YLYIYSTWVYFLPLAITIYCYV. The Cytoplasmic segment spans residues 205-245; sequence FIIKAVAAHEKGMRDQAKKMGIKSLRNEEAQKTSAECRLAK. The helical transmembrane segment at 246–267 threads the bilayer; it reads IAMTTVALWFIAWTPYLLINWV. Topologically, residues 268–278 are extracellular; it reads GMFARSYLSPV. A helical membrane pass occupies residues 279 to 300; that stretch reads YTIWGYVFAKANAVYNPIVYAI. Residue Lys288 is modified to N6-(retinylidene)lysine.

The protein belongs to the G-protein coupled receptor 1 family. Opsin subfamily. Homodimer. Interacts with GNAQ. In terms of processing, contains one covalently linked retinal chromophore.

It is found in the cell projection. Its subcellular location is the rhabdomere membrane. Photoreceptor required for image-forming vision at low light intensity. Can use both retinal and 3-dehydroretinal as visual pigment. Light-induced isomerization of 11-cis to all-trans retinal triggers a conformational change that activates signaling via G-proteins. Signaling via GNAQ probably mediates the activation of phospholipase C. The chain is Rhodopsin (RHO) from Lacunicambarus ludovicianus (Painted devil crayfish).